The sequence spans 321 residues: Ferredoxin--NADP reductase (321 aa).

The FAD site is built by D28, Q36, Y41, A81, F115, D274, and S315.

This sequence belongs to the ferredoxin--NADP reductase type 2 family. As to quaternary structure, homodimer. The cofactor is FAD.

The enzyme catalyses 2 reduced [2Fe-2S]-[ferredoxin] + NADP(+) + H(+) = 2 oxidized [2Fe-2S]-[ferredoxin] + NADPH. This Frankia casuarinae (strain DSM 45818 / CECT 9043 / HFP020203 / CcI3) protein is Ferredoxin--NADP reductase.